The chain runs to 1165 residues: Adhesion G-protein coupled receptor G6 (1165 aa).

The N-terminal stretch at 1–30 (MMFDTLGKRCCPWRLKPSALLFLFVLCVTC) is a signal peptide. At 31–832 (VPLSVCGCGS…ASQIDGRNTK (802 aa)) the chain is on the extracellular side. A disulfide bond links C41 and C67. The region spanning 41–149 (CRLVLSNPSG…KGFNASYIRV (109 aa)) is the CUB domain. E89 and D97 together coordinate Ca(2+). A disulfide bridge links C94 with C111. N121 is a glycosylation site (N-linked (GlcNAc...) asparagine). Ca(2+)-binding residues include D134, S136, and I137. N143 carries an N-linked (GlcNAc...) asparagine glycan. A Pentraxin (PTX) domain is found at 154 to 356 (RNQKVILPQT…ALKAEGNLSC (203 aa)). 2 disulfides stabilise this stretch: C186/C254 and C231/C277. Residues N258, N314, N324, N353, N370, N410, N417, N424, N458, N462, and N478 are each glycosylated (N-linked (GlcNAc...) asparagine). The mediates interaction with laminin-2 stretch occupies residues 446–807 (DKRLVLWALL…LDAGETICLC (362 aa)). 2 disulfide bridges follow: C498–C533 and C521–C550. N536, N549, N563, N570, N665, N674, N720, N746, N781, and N788 each carry an N-linked (GlcNAc...) asparagine glycan. One can recognise a GAIN-B domain in the interval 640–823 (PHVNIETQNL…GVLMDLPRSA (184 aa)). Intrachain disulfides connect C773-C805 and C792-C807. A GPS region spans residues 773-823 (CAFWDMNKNKSFGGWNTSGCVAHSDLDAGETICLCSHFTHFGVLMDLPRSA). The interval 812–820 (HFGVLMDLP) is stachel. Residues 833-853 (VLTFITYIGCGISAIFSAATL) form a helical membrane-spanning segment. The Cytoplasmic portion of the chain corresponds to 854–873 (LTYVAFEKLRRDYPSKILMN). A helical transmembrane segment spans residues 874-894 (LSSALLFLNLIFLLDGWVTSF). Residues 895–899 (GVAGL) lie on the Extracellular side of the membrane. A helical membrane pass occupies residues 900 to 920 (CTAVAALLHFFLLATFTWMGL). Topologically, residues 921-940 (EAIHMYIALVKVFNTYIHRY) are cytoplasmic. The helical transmembrane segment at 941–961 (ILKFCIIGWGLPALVVSIILV) threads the bilayer. Residues 962–994 (SRRQNEVYGKESYGKDQDDEFCWIQDPVVFYVS) are Extracellular-facing. Residues 995–1015 (CAGYFGVMFFLNVAMFIVVMV) traverse the membrane as a helical segment. The Cytoplasmic segment spans residues 1016–1039 (QICGRNGKRSNRTLREEVLRNLRS). Residues 1040–1060 (VVSLTFLLGMTWGFAFFAWGP) form a helical membrane-spanning segment. Residues 1061–1062 (LN) are Extracellular-facing. The chain crosses the membrane as a helical span at residues 1063-1083 (IPFMYLFSIFNSLQGLFIFIF). 17alpha-hydroxyprogesterone is bound at residue N1073. The Cytoplasmic segment spans residues 1084–1165 (HCAMKENVQK…KRNSHSDNFS (82 aa)). Residues 1126–1154 (NLGKSLSSSSIGSNSTYLTSKSKSSSTTY) show a composition bias toward low complexity. Residues 1126–1165 (NLGKSLSSSSIGSNSTYLTSKSKSSSTTYFKRNSHSDNFS) form a disordered region. Phosphoserine is present on residues S1135 and S1138.

Belongs to the G-protein coupled receptor 2 family. Adhesion G-protein coupled receptor (ADGR) subfamily. Heterodimer of 2 chains generated by proteolytic processing; the large extracellular N-terminal fragment and the membrane-bound C-terminal fragment predominantly remain associated and non-covalently linked. Interacts with Laminin-2; this interaction stabilizes the receptor in an inactive state. Laminin-2 polymerization could facilitate ADGRG6-NTF removal, thereby exposing the tethered agonist to drive myelination. Interacts with PRNP. Interacts with ITGB1. Interacts with LRP1. In terms of processing, proteolytically cleaved into 2 conserved sites: one in the GPS region of the GAIN-B domain (S1 site) and the other in the middle of the extracellular domain (S2 site). The proteolytic cleavage at S1 site generates an extracellular subunit and a seven-transmembrane subunit. Furin is involved in the cleavage of the S2 site generating a soluble fragment. Processing at the GPS region occurred independent of and probably prior to the cleavage at the S2 site. Proteolytic cleavage is required for activation of the receptor. As to expression, expressed at high levels in the heart, somite and otic vesicle during embryogenesis and in adult lung.

It is found in the cell membrane. With respect to regulation, forms a heterodimer of 2 chains generated by proteolytic processing that remain associated through non-covalent interactions mediated by the GAIN-B domain. In the inactivated receptor, the Stachel sequence (also named stalk) is embedded in the GAIN-B domain, where it adopts a beta-strand conformation. On activation, the Stachel moves into the 7 transmembrane region and adopts a twisted hook-shaped configuration that forms contacts within the receptor, leading to coupling of a G-alpha protein, which activates signaling. The cleaved GAIN-B and N-terminal domains can then dissociate from the rest of the receptor. Adhesion G-protein coupled receptor (aGPCR) for steroid hormones, such as progesterone and 17alpha-hydroxyprogesterone (17OHP). Involved in many biological processes, such as myelination, sprouting angiogenesis, placenta, ear and cartilage development. Ligand binding causes a conformation change that triggers signaling via guanine nucleotide-binding proteins (G proteins) and modulates the activity of downstream effectors, such as adenylate cyclase. ADGRG6 is coupled to G(i) G alpha proteins and mediates inhibition of adenylate cyclase. Also able to couple to G(q) G proteins. Involved in myelination of the peripheral nervous system: required for differentiation of promyelinating Schwann cells and for normal myelination of axons. Also acts as a regulator of body length and bone mass. Acts as a regulator of blood-brain barrier formation in the central nervous system vie its association with LRP1 and ITGB1. The sequence is that of Adhesion G-protein coupled receptor G6 from Mus musculus (Mouse).